The following is an 813-amino-acid chain: Probable receptor-like protein kinase At5g39020 (813 aa).

A signal peptide spans 1–21 (MNCNVLFLLSVLVSVTAGVTA). Over 22 to 437 (AYHPTDVFLF…TPPIKGKPHV (416 aa)) the chain is Extracellular. Residues Asn46, Asn61, Asn165, Asn202, Asn213, Asn263, Asn286, Asn293, Asn384, and Asn401 are each glycosylated (N-linked (GlcNAc...) asparagine). The chain crosses the membrane as a helical span at residues 438-458 (LVIILIVVGSVIGLATFIVII). Residues 459–813 (MLLIRQMKRK…QTQTLDSTII (355 aa)) lie on the Cytoplasmic side of the membrane. The 276-residue stretch at 496 to 771 (KSFSHTVGKG…KVVEMIEGSL (276 aa)) folds into the Protein kinase domain. ATP is bound by residues 502–510 (VGKGGFGTV) and Lys524. Asp619 acts as the Proton acceptor in catalysis. Residues 791–813 (ESSSLSDGQEAEKQTQTLDSTII) form a disordered region. The span at 804 to 813 (QTQTLDSTII) shows a compositional bias: polar residues.

The protein belongs to the protein kinase superfamily. Ser/Thr protein kinase family.

It is found in the membrane. In Arabidopsis thaliana (Mouse-ear cress), this protein is Probable receptor-like protein kinase At5g39020.